The sequence spans 482 residues: Glutamyl-tRNA(Gln) amidotransferase subunit A (482 aa).

Residues lysine 75 and serine 150 each act as charge relay system in the active site. The active-site Acyl-ester intermediate is the serine 174.

Belongs to the amidase family. GatA subfamily. In terms of assembly, heterotrimer of A, B and C subunits.

The catalysed reaction is L-glutamyl-tRNA(Gln) + L-glutamine + ATP + H2O = L-glutaminyl-tRNA(Gln) + L-glutamate + ADP + phosphate + H(+). In terms of biological role, allows the formation of correctly charged Gln-tRNA(Gln) through the transamidation of misacylated Glu-tRNA(Gln) in organisms which lack glutaminyl-tRNA synthetase. The reaction takes place in the presence of glutamine and ATP through an activated gamma-phospho-Glu-tRNA(Gln). The chain is Glutamyl-tRNA(Gln) amidotransferase subunit A from Acaryochloris marina (strain MBIC 11017).